The following is a 262-amino-acid chain: Small ribosomal subunit protein eS1 (262 aa).

The protein belongs to the eukaryotic ribosomal protein eS1 family. Component of the small ribosomal subunit. Mature ribosomes consist of a small (40S) and a large (60S) subunit. The 40S subunit contains about 33 different proteins and 1 molecule of RNA (18S). The 60S subunit contains about 49 different proteins and 3 molecules of RNA (25S, 5.8S and 5S).

It localises to the cytoplasm. The polypeptide is Small ribosomal subunit protein eS1 (Theileria parva (East coast fever infection agent)).